The primary structure comprises 368 residues: tRNA(Met) cytidine acetate ligase (368 aa).

ATP-binding positions include 7-20, G96, N152, and R175; that span reads IAEFNPFHNGHKYL.

This sequence belongs to the TmcAL family.

It localises to the cytoplasm. It carries out the reaction cytidine(34) in elongator tRNA(Met) + acetate + ATP = N(4)-acetylcytidine(34) in elongator tRNA(Met) + AMP + diphosphate. Catalyzes the formation of N(4)-acetylcytidine (ac(4)C) at the wobble position of elongator tRNA(Met), using acetate and ATP as substrates. First activates an acetate ion to form acetyladenylate (Ac-AMP) and then transfers the acetyl group to tRNA to form ac(4)C34. The sequence is that of tRNA(Met) cytidine acetate ligase from Streptococcus pyogenes serotype M3 (strain SSI-1).